The chain runs to 224 residues: Protein GrpE (224 aa).

Residues 27 to 77 (NQASEDIDQENQSEVVDDTTENEDASEEVYEEDTASEDGSKEKKSFFKKKE) are disordered. Positions 31–62 (EDIDQENQSEVVDDTTENEDASEEVYEEDTAS) are enriched in acidic residues.

The protein belongs to the GrpE family. Homodimer.

It is found in the cytoplasm. Functionally, participates actively in the response to hyperosmotic and heat shock by preventing the aggregation of stress-denatured proteins, in association with DnaK and GrpE. It is the nucleotide exchange factor for DnaK and may function as a thermosensor. Unfolded proteins bind initially to DnaJ; upon interaction with the DnaJ-bound protein, DnaK hydrolyzes its bound ATP, resulting in the formation of a stable complex. GrpE releases ADP from DnaK; ATP binding to DnaK triggers the release of the substrate protein, thus completing the reaction cycle. Several rounds of ATP-dependent interactions between DnaJ, DnaK and GrpE are required for fully efficient folding. The sequence is that of Protein GrpE from Lachnoclostridium phytofermentans (strain ATCC 700394 / DSM 18823 / ISDg) (Clostridium phytofermentans).